Here is a 400-residue protein sequence, read N- to C-terminus: Endoglucanase 5A (400 aa).

An N-terminal signal peptide occupies residues 1–26 (MKKITTIFVVLLMTVALFSIGNTTAA). Substrate contacts are provided by residues His61, 65 to 66 (WY), Tyr92, and His127. Residue Glu165 is the Proton donor of the active site. Position 228 (Tyr228) interacts with substrate. Catalysis depends on Glu254, which acts as the Nucleophile. Residues 260-261 (AT), Trp288, and 293-295 (KDE) contribute to the substrate site. The tract at residues 328–363 (ESASIPPSDPTPPSDPGEPDPTPPSDPGEYPAWDPN) is disordered. Pro residues predominate over residues 334-353 (PSDPTPPSDPGEPDPTPPSD). The Chitin-binding type-3 domain occupies 357–396 (YPAWDPNQIYTNEIVYHNGQLWQAKWWTQNQEPGDPYGPW).

Belongs to the glycosyl hydrolase 5 (cellulase A) family. Monomer.

Its subcellular location is the secreted. It carries out the reaction Endohydrolysis of (1-&gt;4)-beta-D-glucosidic linkages in cellulose, lichenin and cereal beta-D-glucans.. This is Endoglucanase 5A (cel5A) from Salipaludibacillus agaradhaerens (Bacillus agaradhaerens).